We begin with the raw amino-acid sequence, 505 residues long: L-carnitine/gamma-butyrobetaine antiporter (505 aa).

Helical transmembrane passes span 10 to 30 (IEPK…WLTV), 50 to 70 (IWGW…FWLV), 92 to 112 (IFMM…SIEI), 143 to 163 (GPLP…FFFV), 195 to 215 (FYLV…TPLV), 231 to 251 (LDAI…ACGL), 263 to 283 (SYLS…SFIM), 316 to 336 (WTVF…IFLA), 347 to 367 (LCFG…TVLG), 403 to 423 (LSTA…VTLI), 446 to 466 (LLVR…LLAL), and 475 to 495 (AIIA…LSFI).

Belongs to the BCCT transporter (TC 2.A.15) family. CaiT subfamily. In terms of assembly, homotrimer.

The protein localises to the cell inner membrane. The catalysed reaction is 4-(trimethylamino)butanoate(in) + (R)-carnitine(out) = 4-(trimethylamino)butanoate(out) + (R)-carnitine(in). The protein operates within amine and polyamine metabolism; carnitine metabolism. Catalyzes the exchange of L-carnitine for gamma-butyrobetaine. The chain is L-carnitine/gamma-butyrobetaine antiporter from Salmonella arizonae (strain ATCC BAA-731 / CDC346-86 / RSK2980).